The chain runs to 277 residues: Putative thiosulfate sulfurtransferase (277 aa).

2 Rhodanese domains span residues 18–125 (KAPK…PLSA) and 154–274 (AIGT…APIE). Lys67 participates in a covalent cross-link: Isoglutamyl lysine isopeptide (Lys-Gln) (interchain with Q-Cter in protein Pup). The active-site Cysteine persulfide intermediate is the Cys233. Arg238 contributes to the substrate binding site.

It carries out the reaction thiosulfate + hydrogen cyanide = thiocyanate + sulfite + 2 H(+). In terms of biological role, may be a sulfotransferase involved in the formation of thiosulfate. This chain is Putative thiosulfate sulfurtransferase, found in Mycolicibacterium smegmatis (strain ATCC 700084 / mc(2)155) (Mycobacterium smegmatis).